A 181-amino-acid chain; its full sequence is MPLIIGIDPGSRLTGYGIIEKDGSKLRFVDAGTIRTETQEMPERLKRIFAGVERIVKFHGPTEAAVEQVFMAQNPDSALKLGQARGAAIAALVNLDLQVAEYTARQIKQSVVGYGAADKEQVQMMVMRLLNLTIKPQADAADALAAAICHAHASGSMSKLTVLNALGGMARGRSRSSSRRR.

Catalysis depends on residues Asp8, Glu67, and Asp139. Residues Asp8, Glu67, and Asp139 each coordinate Mg(2+).

It belongs to the RuvC family. In terms of assembly, homodimer which binds Holliday junction (HJ) DNA. The HJ becomes 2-fold symmetrical on binding to RuvC with unstacked arms; it has a different conformation from HJ DNA in complex with RuvA. In the full resolvosome a probable DNA-RuvA(4)-RuvB(12)-RuvC(2) complex forms which resolves the HJ. Mg(2+) serves as cofactor.

Its subcellular location is the cytoplasm. It catalyses the reaction Endonucleolytic cleavage at a junction such as a reciprocal single-stranded crossover between two homologous DNA duplexes (Holliday junction).. In terms of biological role, the RuvA-RuvB-RuvC complex processes Holliday junction (HJ) DNA during genetic recombination and DNA repair. Endonuclease that resolves HJ intermediates. Cleaves cruciform DNA by making single-stranded nicks across the HJ at symmetrical positions within the homologous arms, yielding a 5'-phosphate and a 3'-hydroxyl group; requires a central core of homology in the junction. The consensus cleavage sequence is 5'-(A/T)TT(C/G)-3'. Cleavage occurs on the 3'-side of the TT dinucleotide at the point of strand exchange. HJ branch migration catalyzed by RuvA-RuvB allows RuvC to scan DNA until it finds its consensus sequence, where it cleaves and resolves the cruciform DNA. The chain is Crossover junction endodeoxyribonuclease RuvC from Acinetobacter baumannii (strain SDF).